We begin with the raw amino-acid sequence, 354 residues long: Guanine nucleotide-binding protein alpha-12 subunit (354 aa).

Residues 31 to 354 (QPLKLLLLGS…SLLMNVAEIL (324 aa)) enclose the G-alpha domain. The interval 34-47 (KLLLLGSGECGKST) is G1 motif. GTP-binding positions include 39 to 46 (GSGECGKS), 178 to 184 (LRVRVKT), 203 to 207 (DVGGQ), 272 to 275 (NKID), and A329. The Mg(2+) site is built by S46 and T184. Residues 176–184 (DFLRVRVKT) form a G2 motif region. The G3 motif stretch occupies residues 199–208 (FKLVDVGGQK). Residues 268-275 (VLFFNKID) form a G4 motif region. The tract at residues 327 to 332 (TCALDS) is G5 motif.

The protein belongs to the G-alpha family. As to quaternary structure, g proteins are composed of 3 units; alpha, beta and gamma. The alpha chain contains the guanine nucleotide binding site.

Guanine nucleotide-binding proteins (G proteins) are involved as modulators or transducers in various transmembrane signaling systems. The protein is Guanine nucleotide-binding protein alpha-12 subunit (gpaL) of Dictyostelium discoideum (Social amoeba).